The primary structure comprises 256 residues: Nuclear shuttle protein (256 aa).

Positions 18–50 (VSRNQSSKRGTFVRRTDGKRRKGPSSKAHDEPK) are disordered. The short motif at 21–42 (NQSSKRGTFVRRTDGKRRKGPS) is the Bipartite nuclear localization signal element. A Nuclear localization signal motif is present at residues 81–96 (VLGKIEPNRSRSYIKL). The interval 150–187 (EIFGARIHSHGNLAITPGLKDRYYVLHVLKRVLSVEKD) is interaction with Arabidopsis thaliana NSI protein.

It belongs to the begomovirus nuclear shuttle protein family. As to quaternary structure, binds to single-stranded and double-stranded viral DNA. Interacts with the host nuclear shuttle interacting (NSI) protein. This interaction may allow NSP to recruit NSI monomers to the viral genome and thus regulate nuclear export of viral genome by NSP.

Its subcellular location is the host nucleus. It is found in the host cytoplasm. The protein localises to the host cell membrane. Binds to the genomic viral ssDNA, shuttles it into and out of the cell nucleus. Begomoviruses use 2 proteins to transport their DNA from cell to cell. The nuclear shuttle protein (NSP) shuttles it between nucleus and cytoplasm and the movement protein (MP) probably transports the DNA-NSP complex to the cell periphery and facilitates movement across the cell wall. This is Nuclear shuttle protein from Brassica oleracea (Wild cabbage).